The primary structure comprises 419 residues: Transcription termination factor Rho (419 aa).

Positions 48 to 123 constitute a Rho RNA-BD domain; that stretch reads DIFGDGVLEI…LKVNAVNYDK (76 aa). RNA-binding regions lie at residues 61–66, 78–80, and 108–110; these read GFGFLR, DIY, and ERY. Residues 169 to 174, 181 to 186, and Arg-212 contribute to the ATP site; these read GRGQRG and KAGKTI. The segment at 284-288 is RNA-binding 2; that stretch reads VLTGG.

The protein belongs to the Rho family. As to quaternary structure, homohexamer. The homohexamer assembles into an open ring structure.

Its function is as follows. Facilitates transcription termination by a mechanism that involves Rho binding to the nascent RNA, activation of Rho's RNA-dependent ATPase activity, and release of the mRNA from the DNA template. The sequence is that of Transcription termination factor Rho from Buchnera aphidicola subsp. Schizaphis graminum (strain Sg).